The following is a 477-amino-acid chain: Methylenetetrahydrofolate--tRNA-(uracil-5-)-methyltransferase TrmFO (477 aa).

An FAD-binding site is contributed by 15–20 (GAGLAG).

The protein belongs to the MnmG family. TrmFO subfamily. It depends on FAD as a cofactor.

Its subcellular location is the cytoplasm. It carries out the reaction uridine(54) in tRNA + (6R)-5,10-methylene-5,6,7,8-tetrahydrofolate + NADH + H(+) = 5-methyluridine(54) in tRNA + (6S)-5,6,7,8-tetrahydrofolate + NAD(+). It catalyses the reaction uridine(54) in tRNA + (6R)-5,10-methylene-5,6,7,8-tetrahydrofolate + NADPH + H(+) = 5-methyluridine(54) in tRNA + (6S)-5,6,7,8-tetrahydrofolate + NADP(+). In terms of biological role, catalyzes the folate-dependent formation of 5-methyl-uridine at position 54 (M-5-U54) in all tRNAs. The protein is Methylenetetrahydrofolate--tRNA-(uracil-5-)-methyltransferase TrmFO of Nitrobacter winogradskyi (strain ATCC 25391 / DSM 10237 / CIP 104748 / NCIMB 11846 / Nb-255).